The sequence spans 227 residues: UPF0758 protein Pcar_0065 (227 aa).

Residues Arg-105–Leu-227 form the MPN domain. Residues His-176, His-178, and Asp-189 each coordinate Zn(2+). Residues His-176–Asp-189 carry the JAMM motif motif.

Belongs to the UPF0758 family.

In Syntrophotalea carbinolica (strain DSM 2380 / NBRC 103641 / GraBd1) (Pelobacter carbinolicus), this protein is UPF0758 protein Pcar_0065.